The sequence spans 161 residues: 2-C-methyl-D-erythritol 2,4-cyclodiphosphate synthase (161 aa).

Positions 10 and 12 each coordinate a divalent metal cation. Residues 10–12 (DVH) and 36–37 (HS) contribute to the 4-CDP-2-C-methyl-D-erythritol 2-phosphate site. Histidine 44 lines the a divalent metal cation pocket. 4-CDP-2-C-methyl-D-erythritol 2-phosphate-binding positions include 58–60 (DIG), 63–67 (FSDTD), and arginine 144.

The protein belongs to the IspF family. In terms of assembly, homotrimer. A divalent metal cation serves as cofactor.

The enzyme catalyses 4-CDP-2-C-methyl-D-erythritol 2-phosphate = 2-C-methyl-D-erythritol 2,4-cyclic diphosphate + CMP. It participates in isoprenoid biosynthesis; isopentenyl diphosphate biosynthesis via DXP pathway; isopentenyl diphosphate from 1-deoxy-D-xylulose 5-phosphate: step 4/6. Functionally, involved in the biosynthesis of isopentenyl diphosphate (IPP) and dimethylallyl diphosphate (DMAPP), two major building blocks of isoprenoid compounds. Catalyzes the conversion of 4-diphosphocytidyl-2-C-methyl-D-erythritol 2-phosphate (CDP-ME2P) to 2-C-methyl-D-erythritol 2,4-cyclodiphosphate (ME-CPP) with a corresponding release of cytidine 5-monophosphate (CMP). The chain is 2-C-methyl-D-erythritol 2,4-cyclodiphosphate synthase from Burkholderia cenocepacia (strain HI2424).